The primary structure comprises 109 residues: Nucleoid-associated protein ECA1177 (109 aa).

Belongs to the YbaB/EbfC family. As to quaternary structure, homodimer.

It localises to the cytoplasm. It is found in the nucleoid. Functionally, binds to DNA and alters its conformation. May be involved in regulation of gene expression, nucleoid organization and DNA protection. This Pectobacterium atrosepticum (strain SCRI 1043 / ATCC BAA-672) (Erwinia carotovora subsp. atroseptica) protein is Nucleoid-associated protein ECA1177.